Here is a 394-residue protein sequence, read N- to C-terminus: Na(+)/H(+) antiporter NhaA (394 aa).

A run of 11 helical transmembrane segments spans residues 14–34 (AGGL…NSAL), 59–79 (LLLW…GLEV), 95–115 (VFPA…YLLF), 125–145 (GWAI…ALLG), 154–174 (VFLL…IALF), 179–199 (VSLQ…YMNW), 213–233 (LVLW…GVIV), 254–274 (GLHP…NAGV), 292–312 (IATG…WLAV), 328–348 (IFAV…IASL), and 363–383 (LGIL…LRLV).

It belongs to the NhaA Na(+)/H(+) (TC 2.A.33) antiporter family.

It localises to the cell inner membrane. The enzyme catalyses Na(+)(in) + 2 H(+)(out) = Na(+)(out) + 2 H(+)(in). Na(+)/H(+) antiporter that extrudes sodium in exchange for external protons. This is Na(+)/H(+) antiporter NhaA from Yersinia pestis bv. Antiqua (strain Angola).